Reading from the N-terminus, the 687-residue chain is Transketolase 2 (687 aa).

Residue histidine 47 participates in substrate binding. Thiamine diphosphate contacts are provided by residues histidine 87 and 135–137 (GPL). Mg(2+) is bound at residue aspartate 176. Residues glycine 177 and asparagine 206 each coordinate thiamine diphosphate. Residues asparagine 206 and isoleucine 208 each contribute to the Mg(2+) site. Substrate-binding residues include histidine 282, arginine 379, and serine 406. Histidine 282 serves as a coordination point for thiamine diphosphate. Glutamate 432 acts as the Proton donor in catalysis. Phenylalanine 458 contacts thiamine diphosphate. Histidine 482, aspartate 490, histidine 494, and arginine 541 together coordinate substrate.

The protein belongs to the transketolase family. It depends on Mg(2+) as a cofactor. Thiamine diphosphate serves as cofactor.

The enzyme catalyses D-sedoheptulose 7-phosphate + D-glyceraldehyde 3-phosphate = aldehydo-D-ribose 5-phosphate + D-xylulose 5-phosphate. Its activity is regulated as follows. Activity is increased sixfold following autotrophic growth on methanol compared with that of heterotrophically grown cells. Catalyzes the transfer of a two-carbon ketol group from a ketose donor to an aldose acceptor, via a covalent intermediate with the cofactor thiamine pyrophosphate. The sequence is that of Transketolase 2 from Xanthobacter flavus.